Consider the following 86-residue polypeptide: Small ribosomal subunit protein eS27 (86 aa).

The segment at 39–61 (CQGCFNITTVFSHSQTVVVCPGC) adopts a C4-type zinc-finger fold.

Belongs to the eukaryotic ribosomal protein eS27 family. It depends on Zn(2+) as a cofactor.

This is Small ribosomal subunit protein eS27 (RPS27) from Hordeum vulgare (Barley).